A 295-amino-acid polypeptide reads, in one-letter code: Bifunctional protein FolD (295 aa).

NADP(+) is bound by residues 166–168, S195, and I236; that span reads GRS.

It belongs to the tetrahydrofolate dehydrogenase/cyclohydrolase family. As to quaternary structure, homodimer.

The catalysed reaction is (6R)-5,10-methylene-5,6,7,8-tetrahydrofolate + NADP(+) = (6R)-5,10-methenyltetrahydrofolate + NADPH. It carries out the reaction (6R)-5,10-methenyltetrahydrofolate + H2O = (6R)-10-formyltetrahydrofolate + H(+). The protein operates within one-carbon metabolism; tetrahydrofolate interconversion. Its function is as follows. Catalyzes the oxidation of 5,10-methylenetetrahydrofolate to 5,10-methenyltetrahydrofolate and then the hydrolysis of 5,10-methenyltetrahydrofolate to 10-formyltetrahydrofolate. In Chlorobium luteolum (strain DSM 273 / BCRC 81028 / 2530) (Pelodictyon luteolum), this protein is Bifunctional protein FolD.